A 420-amino-acid polypeptide reads, in one-letter code: 3-phosphoshikimate 1-carboxyvinyltransferase (420 aa).

Lysine 20, serine 21, and arginine 25 together coordinate 3-phosphoshikimate. Residue lysine 20 participates in phosphoenolpyruvate binding. Phosphoenolpyruvate is bound at residue arginine 119. Positions 161, 162, 163, 189, 303, 326, and 330 each coordinate 3-phosphoshikimate. Residue glutamine 163 coordinates phosphoenolpyruvate. The Proton acceptor role is filled by aspartate 303. Residues arginine 334, arginine 375, and lysine 400 each coordinate phosphoenolpyruvate.

It belongs to the EPSP synthase family. In terms of assembly, monomer.

It is found in the cytoplasm. The catalysed reaction is 3-phosphoshikimate + phosphoenolpyruvate = 5-O-(1-carboxyvinyl)-3-phosphoshikimate + phosphate. Its pathway is metabolic intermediate biosynthesis; chorismate biosynthesis; chorismate from D-erythrose 4-phosphate and phosphoenolpyruvate: step 6/7. In terms of biological role, catalyzes the transfer of the enolpyruvyl moiety of phosphoenolpyruvate (PEP) to the 5-hydroxyl of shikimate-3-phosphate (S3P) to produce enolpyruvyl shikimate-3-phosphate and inorganic phosphate. The polypeptide is 3-phosphoshikimate 1-carboxyvinyltransferase (Dehalococcoides mccartyi (strain ATCC BAA-2100 / JCM 16839 / KCTC 5957 / BAV1)).